A 321-amino-acid polypeptide reads, in one-letter code: Citrate synthase (321 aa).

Catalysis depends on residues H248 and D306.

The protein belongs to the citrate synthase family.

The enzyme catalyses oxaloacetate + acetyl-CoA + H2O = citrate + CoA + H(+). Its pathway is carbohydrate metabolism; tricarboxylic acid cycle; isocitrate from oxaloacetate: step 1/2. The polypeptide is Citrate synthase (gltA) (Bartonella elizabethae (Rochalimaea elizabethae)).